We begin with the raw amino-acid sequence, 134 residues long: DNA-directed RNA polymerase subunit omega (134 aa).

This sequence belongs to the RNA polymerase subunit omega family. In terms of assembly, the RNAP catalytic core consists of 2 alpha, 1 beta, 1 beta' and 1 omega subunit. When a sigma factor is associated with the core the holoenzyme is formed, which can initiate transcription.

The enzyme catalyses RNA(n) + a ribonucleoside 5'-triphosphate = RNA(n+1) + diphosphate. In terms of biological role, promotes RNA polymerase assembly. Latches the N- and C-terminal regions of the beta' subunit thereby facilitating its interaction with the beta and alpha subunits. The protein is DNA-directed RNA polymerase subunit omega of Rhizobium johnstonii (strain DSM 114642 / LMG 32736 / 3841) (Rhizobium leguminosarum bv. viciae).